A 295-amino-acid chain; its full sequence is Aspartate carbamoyltransferase catalytic subunit (295 aa).

The carbamoyl phosphate site is built by Arg49 and Thr50. Lys77 lines the L-aspartate pocket. Residues Arg99, His127, and Gln130 each coordinate carbamoyl phosphate. L-aspartate contacts are provided by Arg161 and Arg212. Positions 251 and 252 each coordinate carbamoyl phosphate.

This sequence belongs to the aspartate/ornithine carbamoyltransferase superfamily. ATCase family. In terms of assembly, heterododecamer (2C3:3R2) of six catalytic PyrB chains organized as two trimers (C3), and six regulatory PyrI chains organized as three dimers (R2).

It catalyses the reaction carbamoyl phosphate + L-aspartate = N-carbamoyl-L-aspartate + phosphate + H(+). Its pathway is pyrimidine metabolism; UMP biosynthesis via de novo pathway; (S)-dihydroorotate from bicarbonate: step 2/3. Its function is as follows. Catalyzes the condensation of carbamoyl phosphate and aspartate to form carbamoyl aspartate and inorganic phosphate, the committed step in the de novo pyrimidine nucleotide biosynthesis pathway. The chain is Aspartate carbamoyltransferase catalytic subunit from Campylobacter jejuni subsp. jejuni serotype O:2 (strain ATCC 700819 / NCTC 11168).